Reading from the N-terminus, the 437-residue chain is Serine--tRNA ligase (437 aa).

An L-serine-binding site is contributed by 240–242 (TAE). Residue 271–273 (RAE) participates in ATP binding. Glutamate 294 is a binding site for L-serine. Position 358–361 (358–361 (EISS)) interacts with ATP. L-serine is bound at residue serine 394.

Belongs to the class-II aminoacyl-tRNA synthetase family. Type-1 seryl-tRNA synthetase subfamily. In terms of assembly, homodimer. The tRNA molecule binds across the dimer.

Its subcellular location is the cytoplasm. It catalyses the reaction tRNA(Ser) + L-serine + ATP = L-seryl-tRNA(Ser) + AMP + diphosphate + H(+). The catalysed reaction is tRNA(Sec) + L-serine + ATP = L-seryl-tRNA(Sec) + AMP + diphosphate + H(+). The protein operates within aminoacyl-tRNA biosynthesis; selenocysteinyl-tRNA(Sec) biosynthesis; L-seryl-tRNA(Sec) from L-serine and tRNA(Sec): step 1/1. Catalyzes the attachment of serine to tRNA(Ser). Is also able to aminoacylate tRNA(Sec) with serine, to form the misacylated tRNA L-seryl-tRNA(Sec), which will be further converted into selenocysteinyl-tRNA(Sec). This chain is Serine--tRNA ligase, found in Methylobacterium nodulans (strain LMG 21967 / CNCM I-2342 / ORS 2060).